The sequence spans 180 residues: High mobility group protein B1 (180 aa).

Positions 1 to 8 (VNFSEFSK) match the Nuclear localization signal (NLS) 1 motif. A DNA-binding region (HMG box 1) is located at residues 1-44 (VNFSEFSKKCSERWKTMSAKEKGKFEDMAKADKARYEREMKTYI). The residue at position 8 (Lys8) is an N6-acetyllysine. Isoglutamyl lysine isopeptide (Lys-Gln) (interchain with Q-?) cross-links involve residues Lys8 and Lys9. At Cys10 the chain carries Cysteine sulfonic acid (-SO3H). Residue Lys33 forms an Isoglutamyl lysine isopeptide (Lys-Gln) (interchain with Q-?) linkage. The tract at residues 45–61 (PPKGETKKKFKDPNAPK) is LPS binding (Lipid A). The tract at residues 54–73 (FKDPNAPKRPPSAFFLFCSE) is cytokine-stimulating activity. N6-acetyllysine is present on Lys55. A DNA-binding region (HMG box 2) is located at residues 60-128 (PKRPPSAFFL…KYEKDIAAYR (69 aa)). Ser65 is modified (phosphoserine). The residue at position 71 (Cys71) is a Cysteine sulfonic acid (-SO3H). N6-acetyllysine is present on residues Lys92, Lys93, Lys106, Lys137, Lys138, Lys142, and Lys145. The interval 115 to 148 (KLKEKYEKDIAAYRAKGKPDAAKKGVVKAEKSKK) is binding to AGER/RAGE. The segment covering 126–144 (AYRAKGKPDAAKKGVVKAE) has biased composition (basic and acidic residues). A disordered region spans residues 126 to 180 (AYRAKGKPDAAKKGVVKAEKSKKKKEEEDDEEDEEDEEEEEEEEDEDEEEDDDDE). The short motif at 143–149 (AEKSKKK) is the Nuclear localization signal (NLS) 2 element. The interval 143–149 (AEKSKKK) is NLS 2. Lys145 participates in a covalent cross-link: Isoglutamyl lysine isopeptide (Lys-Gln) (interchain with Q-?). ADP-ribosylserine is present on Ser146. N6-acetyllysine occurs at positions 147, 148, 149, and 150. Residues Lys147, Lys148, and Lys149 each participate in an isoglutamyl lysine isopeptide (Lys-Gln) (interchain with Q-?) cross-link. Positions 152 to 180 (EEDDEEDEEDEEEEEEEEDEDEEEDDDDE) are enriched in acidic residues.

Belongs to the HMGB family. Interacts (fully reduced HMGB1) with CXCL12; probably in a 1:2 ratio involving two molecules of CXCL12, each interacting with one HMG box of HMGB1; inhibited by glycyrrhizin. Associates with the TLR4:LY96 receptor complex. Component of the RAG complex composed of core components RAG1 and RAG2, and associated component HMGB1 or HMGB2. Interacts (in cytoplasm upon starvation) with BECN1; inhibits the interaction of BECN1 and BCL2 leading to promotion of autophagy. Interacts with KPNA1; involved in nuclear import. Interacts with SREBF1, TLR2, TLR4, TLR9, PTPRZ1, APEX1, FEN1, POLB, TERT. Interacts with IL1B, AGER, MSH2, XPA, XPC, HNF1A, TP53. Interacts with CD24; the probable CD24:SIGLEC10 complex is proposed to inhibit HGMB1-mediated tissue damage immune response. Interacts with THBD; prevents HGMB1 interaction with ACER/RAGE and inhibits HGMB1 pro-inflammatory activity. Interacts with HAVCR2; impairs HMGB1 binding to B-DNA and likely HMGB1-mediated innate immune response. Interacts with XPO1; mediating nuclear export. Interacts with receptor RAGE/AGER. Post-translationally, phosphorylated at serine residues. Phosphorylation in both NLS regions is required for cytoplasmic translocation followed by secretion. Acetylated on multiple sites upon stimulation with LPS. Acetylation on lysine residues in the nuclear localization signals (NLS 1 and NLS 2) leads to cytoplasmic localization and subsequent secretion. In terms of processing, reduction/oxidation of cysteine residues and a possible intramolecular disulfide bond give rise to different redox forms with specific functional activities in various cellular compartments: 1- fully reduced HMGB1 (HMGB1C23hC45hC106h), 2-disulfide HMGB1 (HMGB1C23-C45C106h) and 3- sulfonyl HMGB1 (HMGB1C23soC45soC106so). Post-translationally, poly-ADP-ribosylated by PARP1 when secreted following stimulation with LPS. In vitro cleavage by CASP1 is liberating a HMG box 1-containing peptide which may mediate immunogenic activity; the peptide antagonizes apoptosis-induced immune tolerance. Can be proteolytically cleaved by a thrombin:thrombomodulin complex; reduces binding to heparin and pro-inflammatory activities. In terms of processing, forms covalent cross-links mediated by transglutaminase TGM2, between a glutamine and the epsilon-amino group of a lysine residue, forming homopolymers and heteropolymers.

Its subcellular location is the nucleus. It is found in the chromosome. The protein localises to the cytoplasm. It localises to the secreted. The protein resides in the cell membrane. Its subcellular location is the endosome. It is found in the endoplasmic reticulum-Golgi intermediate compartment. In terms of biological role, multifunctional redox sensitive protein with various roles in different cellular compartments. In the nucleus is one of the major chromatin-associated non-histone proteins and acts as a DNA chaperone involved in replication, transcription, chromatin remodeling, V(D)J recombination, DNA repair and genome stability. Proposed to be an universal biosensor for nucleic acids. Promotes host inflammatory response to sterile and infectious signals and is involved in the coordination and integration of innate and adaptive immune responses. In the cytoplasm functions as a sensor and/or chaperone for immunogenic nucleic acids implicating the activation of TLR9-mediated immune responses, and mediates autophagy. Acts as a danger-associated molecular pattern (DAMP) molecule that amplifies immune responses during tissue injury. Released to the extracellular environment can bind DNA, nucleosomes, IL-1 beta, CXCL12, AGER isoform 2/sRAGE, lipopolysaccharide (LPS) and lipoteichoic acid (LTA), and activates cells through engagement of multiple surface receptors. In the extracellular compartment fully reduced HMGB1 (released by necrosis) acts as a chemokine, disulfide HMGB1 (actively secreted) as a cytokine, and sulfonyl HMGB1 (released from apoptotic cells) promotes immunological tolerance. Has proangiogenic activity. May be involved in platelet activation. Binds to phosphatidylserine and phosphatidylethanolamide. Bound to RAGE mediates signaling for neuronal outgrowth. May play a role in accumulation of expanded polyglutamine (polyQ) proteins. Nuclear functions are attributed to fully reduced HGMB1. Associates with chromatin and binds DNA with a preference to non-canonical DNA structures such as single-stranded DNA, DNA-containing cruciforms or bent structures, supercoiled DNA and ZDNA. Can bent DNA and enhance DNA flexibility by looping thus providing a mechanism to promote activities on various gene promoters by enhancing transcription factor binding and/or bringing distant regulatory sequences into close proximity. May be involved in nucleotide excision repair (NER), mismatch repair (MMR) and base excision repair (BER) pathways, and double strand break repair such as non-homologous end joining (NHEJ). Involved in V(D)J recombination by acting as a cofactor of the RAG complex: acts by stimulating cleavage and RAG protein binding at the 23 bp spacer of conserved recombination signal sequences (RSS). In vitro can displace histone H1 from highly bent DNA. Can restructure the canonical nucleosome leading to relaxation of structural constraints for transcription factor-binding. Enhances binding of sterol regulatory element-binding proteins (SREBPs) such as SREBF1 to their cognate DNA sequences and increases their transcriptional activities. Facilitates binding of TP53 to DNA. May be involved in mitochondrial quality control and autophagy in a transcription-dependent fashion implicating HSPB1. Can modulate the activity of the telomerase complex and may be involved in telomere maintenance. Its function is as follows. In the cytoplasm proposed to dissociate the BECN1:BCL2 complex via competitive interaction with BECN1 leading to autophagy activation. Can protect BECN1 and ATG5 from calpain-mediated cleavage and thus proposed to control their proautophagic and proapoptotic functions and to regulate the extent and severity of inflammation-associated cellular injury. In myeloid cells has a protective role against endotoxemia and bacterial infection by promoting autophagy. Involved in endosomal translocation and activation of TLR9 in response to CpG-DNA in macrophages. Functionally, in the extracellular compartment (following either active secretion or passive release) involved in regulation of the inflammatory response. Fully reduced HGMB1 (which subsequently gets oxidized after release) in association with CXCL12 mediates the recruitment of inflammatory cells during the initial phase of tissue injury; the CXCL12:HMGB1 complex triggers CXCR4 homodimerization. Induces the migration of monocyte-derived immature dendritic cells and seems to regulate adhesive and migratory functions of neutrophils implicating AGER/RAGE and ITGAM. Can bind to various types of DNA and RNA including microbial unmethylated CpG-DNA to enhance the innate immune response to nucleic acids. Proposed to act in promiscuous DNA/RNA sensing which cooperates with subsequent discriminative sensing by specific pattern recognition receptors. Promotes extracellular DNA-induced AIM2 inflammasome activation implicating AGER/RAGE. Disulfide HMGB1 binds to transmembrane receptors, such as AGER/RAGE, TLR2, TLR4 and probably TREM1, thus activating their signal transduction pathways. Mediates the release of cytokines/chemokines such as TNF, IL-1, IL-6, IL-8, CCL2, CCL3, CCL4 and CXCL10. Promotes secretion of interferon-gamma by macrophage-stimulated natural killer (NK) cells in concert with other cytokines like IL-2 or IL-12. TLR4 is proposed to be the primary receptor promoting macrophage activation and signaling through TLR4 seems to implicate LY96/MD-2. In bacterial LPS- or LTA-mediated inflammatory responses binds to the endotoxins and transfers them to CD14 for signaling to the respective TLR4:LY96 and TLR2 complexes. Contributes to tumor proliferation by association with ACER/RAGE. Can bind to IL1-beta and signals through the IL1R1:IL1RAP receptor complex. Binding to class A CpG activates cytokine production in plasmacytoid dendritic cells implicating TLR9, MYD88 and AGER/RAGE and can activate autoreactive B cells. Via HMGB1-containing chromatin immune complexes may also promote B cell responses to endogenous TLR9 ligands through a B-cell receptor (BCR)-dependent and ACER/RAGE-independent mechanism. Inhibits phagocytosis of apoptotic cells by macrophages; the function is dependent on poly-ADP-ribosylation and involves binding to phosphatidylserine on the cell surface of apoptotic cells. In adaptive immunity may be involved in enhancing immunity through activation of effector T-cells and suppression of regulatory T (TReg) cells. In contrast, without implicating effector or regulatory T-cells, required for tumor infiltration and activation of T-cells expressing the lymphotoxin LTA:LTB heterotrimer thus promoting tumor malignant progression. Also reported to limit proliferation of T-cells. Released HMGB1:nucleosome complexes formed during apoptosis can signal through TLR2 to induce cytokine production. Involved in induction of immunological tolerance by apoptotic cells; its pro-inflammatory activities when released by apoptotic cells are neutralized by reactive oxygen species (ROS)-dependent oxidation specifically on Cys-106. During macrophage activation by activated lymphocyte-derived self apoptotic DNA (ALD-DNA) promotes recruitment of ALD-DNA to endosomes. This Cricetulus griseus (Chinese hamster) protein is High mobility group protein B1 (HMGB1).